The primary structure comprises 224 residues: Flagellar L-ring protein (224 aa).

The N-terminal stretch at 1–15 (MARYLVLAVALLLAA) is a signal peptide. The N-palmitoyl cysteine moiety is linked to residue C16. Residue C16 is the site of S-diacylglycerol cysteine attachment.

This sequence belongs to the FlgH family. As to quaternary structure, the basal body constitutes a major portion of the flagellar organelle and consists of four rings (L,P,S, and M) mounted on a central rod.

The protein resides in the cell outer membrane. Its subcellular location is the bacterial flagellum basal body. Assembles around the rod to form the L-ring and probably protects the motor/basal body from shearing forces during rotation. In Shewanella baltica (strain OS185), this protein is Flagellar L-ring protein.